The chain runs to 240 residues: uncharacterized protein (240 aa).

One can recognise an ABC transporter domain in the interval 2-223; the sequence is VRIQDLSLAF…GNAPRELHQA (222 aa). Residue 34-41 participates in ATP binding; sequence GSSGVGKS.

It belongs to the ABC transporter superfamily.

This is an uncharacterized protein from Haemophilus influenzae (strain ATCC 51907 / DSM 11121 / KW20 / Rd).